A 282-amino-acid chain; its full sequence is Bis(5'-nucleosyl)-tetraphosphatase, symmetrical (282 aa).

This sequence belongs to the Ap4A hydrolase family.

The enzyme catalyses P(1),P(4)-bis(5'-adenosyl) tetraphosphate + H2O = 2 ADP + 2 H(+). Functionally, hydrolyzes diadenosine 5',5'''-P1,P4-tetraphosphate to yield ADP. In Escherichia fergusonii (strain ATCC 35469 / DSM 13698 / CCUG 18766 / IAM 14443 / JCM 21226 / LMG 7866 / NBRC 102419 / NCTC 12128 / CDC 0568-73), this protein is Bis(5'-nucleosyl)-tetraphosphatase, symmetrical.